We begin with the raw amino-acid sequence, 122 residues long: Probable non-specific lipid-transfer protein 3 (122 aa).

The signal sequence occupies residues 1–29; the sequence is MARLNSKAVAAAVVLAAVVLMMAGREASA. 4 disulfides stabilise this stretch: cysteine 33/cysteine 81, cysteine 43/cysteine 58, cysteine 59/cysteine 104, and cysteine 79/cysteine 118.

Belongs to the plant LTP family. Expressed in phloem. Also detected in the epidermis near the vascular tissues in resistant plants infected by Hessian fly larvae.

Plant non-specific lipid-transfer proteins transfer phospholipids as well as galactolipids across membranes. May play a role in wax or cutin deposition in the cell walls of expanding epidermal cells and certain secretory tissues. The chain is Probable non-specific lipid-transfer protein 3 (LTP3) from Triticum aestivum (Wheat).